A 336-amino-acid polypeptide reads, in one-letter code: Putative bifunctional cytochrome c-type biogenesis protein CcmAE (336 aa).

A cytochrome c biogenesis ATP-binding export protein CcmA 2 region spans residues 1 to 199 (MLEARDLYCE…ADTVRRLALT (199 aa)). Residues 2-242 (LEARDLYCER…VGQRLRVGGM (241 aa)) enclose the ABC transporter domain. 34-41 (GGNGAGKT) contacts ATP. Positions 196 to 336 (LALTTALVLY…PQRVDKDTSS (141 aa)) are cytochrome c-type biogenesis protein CcmE 2. Positions 307 and 311 each coordinate heme. Residues 307 to 336 (HDENYTPPEVEKAMQENHRRPQRVDKDTSS) are disordered.

It in the N-terminal section; belongs to the ABC transporter superfamily. CcmA exporter (TC 3.A.1.107) family. This sequence in the C-terminal section; belongs to the CcmE/CycJ family.

Its subcellular location is the cell inner membrane. The enzyme catalyses heme b(in) + ATP + H2O = heme b(out) + ADP + phosphate + H(+). Part of the ABC transporter complex CcmAB involved in the biogenesis of c-type cytochromes; once thought to export heme, this seems not to be the case, but its exact role is uncertain. Responsible for energy coupling to the transport system. In terms of biological role, heme chaperone required for the biogenesis of c-type cytochromes. Transiently binds heme delivered by CcmC and transfers the heme to apo-cytochromes in a process facilitated by CcmF and CcmH. In Salmonella choleraesuis (strain SC-B67), this protein is Putative bifunctional cytochrome c-type biogenesis protein CcmAE (ccmAE).